A 404-amino-acid chain; its full sequence is Sulfate adenylyltransferase (404 aa).

This sequence belongs to the sulfate adenylyltransferase family.

It carries out the reaction sulfate + ATP + H(+) = adenosine 5'-phosphosulfate + diphosphate. It functions in the pathway sulfur metabolism; hydrogen sulfide biosynthesis; sulfite from sulfate: step 1/3. In Chlorobium chlorochromatii (strain CaD3), this protein is Sulfate adenylyltransferase.